Consider the following 159-residue polypeptide: Transcriptional repressor NrdR (159 aa).

A zinc finger lies at 3 to 34; sequence CPFCGSDNTSVKDSRAAEDDTAVRRRRVCESC. An ATP-cone domain is found at 49–139; the sequence is IIVVKRDGKR…VYRDFKDPSD (91 aa).

This sequence belongs to the NrdR family. Requires Zn(2+) as cofactor.

In terms of biological role, negatively regulates transcription of bacterial ribonucleotide reductase nrd genes and operons by binding to NrdR-boxes. The sequence is that of Transcriptional repressor NrdR from Hyphomonas neptunium (strain ATCC 15444).